The following is a 267-amino-acid chain: Hydroxyethylthiazole kinase (267 aa).

Met48 contributes to the substrate binding site. 2 residues coordinate ATP: Arg124 and Ser170. A substrate-binding site is contributed by Gly197.

It belongs to the Thz kinase family. The cofactor is Mg(2+).

The enzyme catalyses 5-(2-hydroxyethyl)-4-methylthiazole + ATP = 4-methyl-5-(2-phosphooxyethyl)-thiazole + ADP + H(+). It functions in the pathway cofactor biosynthesis; thiamine diphosphate biosynthesis; 4-methyl-5-(2-phosphoethyl)-thiazole from 5-(2-hydroxyethyl)-4-methylthiazole: step 1/1. Its function is as follows. Catalyzes the phosphorylation of the hydroxyl group of 4-methyl-5-beta-hydroxyethylthiazole (THZ). The protein is Hydroxyethylthiazole kinase of Aliivibrio fischeri (strain ATCC 700601 / ES114) (Vibrio fischeri).